The chain runs to 544 residues: Formate--tetrahydrofolate ligase (544 aa).

63–70 (TPAGEGKS) contacts ATP.

Belongs to the formate--tetrahydrofolate ligase family.

It carries out the reaction (6S)-5,6,7,8-tetrahydrofolate + formate + ATP = (6R)-10-formyltetrahydrofolate + ADP + phosphate. Its pathway is one-carbon metabolism; tetrahydrofolate interconversion. The protein is Formate--tetrahydrofolate ligase of Fusobacterium nucleatum subsp. nucleatum (strain ATCC 25586 / DSM 15643 / BCRC 10681 / CIP 101130 / JCM 8532 / KCTC 2640 / LMG 13131 / VPI 4355).